Reading from the N-terminus, the 82-residue chain is uncharacterized protein (82 aa).

Belongs to the chlamydial CPn_0710/CT_666/TC_0037 family.

This is an uncharacterized protein from Chlamydia muridarum (strain MoPn / Nigg).